Reading from the N-terminus, the 534-residue chain is Lysophosphatidylcholine acyltransferase 1 (534 aa).

Residues Met1 to Ala25 form a disordered region. Residues Met1–Arg57 are Cytoplasmic-facing. The segment covering Pro8–Gly19 has biased composition (low complexity). Residues Leu58–Gly78 traverse the membrane as a helical; Signal-anchor for type II membrane protein segment. The Lumenal portion of the chain corresponds to Pro79 to Asp534. Positions His135–Asp140 match the HXXXXD motif motif. 2 consecutive EF-hand domains span residues Pro379–Pro414 and Val451–Tyr486. Ca(2+)-binding residues include Asp392, Ser394, Glu398, and Glu403. The Di-lysine motif motif lies at Lys531–Asp534.

Belongs to the 1-acyl-sn-glycerol-3-phosphate acyltransferase family. Predominantly expressed in lung where it is enriched in alveolar type II cells. Expressed at lower levels in spleen and brain. Also detected in erythroleukemic cells and reticulocytes. Weakly or not expressed in other tissues.

It is found in the endoplasmic reticulum membrane. It localises to the golgi apparatus membrane. Its subcellular location is the cell membrane. The protein resides in the lipid droplet. The enzyme catalyses a 1-acyl-sn-glycero-3-phosphocholine + an acyl-CoA = a 1,2-diacyl-sn-glycero-3-phosphocholine + CoA. It carries out the reaction a 1-O-alkyl-sn-glycero-3-phosphocholine + acetyl-CoA = a 1-O-alkyl-2-acetyl-sn-glycero-3-phosphocholine + CoA. It catalyses the reaction a 1-acyl-sn-glycero-3-phosphate + an acyl-CoA = a 1,2-diacyl-sn-glycero-3-phosphate + CoA. The catalysed reaction is a 1-O-(1Z-alkenyl)-sn-glycero-3-phosphocholine + an acyl-CoA = a 1-O-(1Z-alkenyl)-2-acyl-sn-glycero-3-phosphocholine + CoA. The enzyme catalyses 1-acyl-sn-glycero-3-phospho-(1'-sn-glycerol) + an acyl-CoA = a 1,2-diacyl-sn-glycero-3-phospho-(1'-sn-glycerol) + CoA. It carries out the reaction 1-hexadecanoyl-sn-glycero-3-phosphocholine + hexadecanoyl-CoA = 1,2-dihexadecanoyl-sn-glycero-3-phosphocholine + CoA. It catalyses the reaction 1-O-hexadecyl-sn-glycero-3-phosphocholine + hexadecanoyl-CoA = 1-O-hexadecyl-2-hexadecanoyl-sn-glycero-3-phosphocholine + CoA. The catalysed reaction is a 1-O-(1Z-alkenyl)-sn-glycero-3-phosphocholine + hexadecanoyl-CoA = 1-O-(1Z)-alkenyl-2-hexadecanoyl-sn-glycero-3-phosphocholine + CoA. The enzyme catalyses 1-hexadecanoyl-sn-glycero-3-phospho-(1'-sn-glycerol) + hexadecanoyl-CoA = 1,2-dihexadecanoyl-sn-glycero-3-phospho-(1'-sn-glycerol) + CoA. It carries out the reaction 1-dodecanoyl-sn-glycero-3-phosphocholine + hexadecanoyl-CoA = 1-dodecanoyl-2-hexadecanoyl-sn-glycero-3-phosphocholine + CoA. It catalyses the reaction 1-tetradecanoyl-sn-glycero-3-phosphocholine + hexadecanoyl-CoA = 1-tetradecanoyl-2-hexadecanoyl-sn-glycero-3-phosphocholine + CoA. The catalysed reaction is 1-O-octadecyl-sn-glycero-3-phosphocholine + hexadecanoyl-CoA = 1-O-octadecyl-2-hexadecanoyl-sn-glycero-3-phosphocholine + CoA. The enzyme catalyses 1-octadecanoyl-sn-glycero-3-phosphocholine + hexadecanoyl-CoA = 1-octadecanoyl-2-hexadecanoyl-sn-glycero-3-phosphocholine + CoA. It carries out the reaction 1-(9Z-octadecenoyl)-sn-glycero-3-phosphocholine + hexadecanoyl-CoA = 1-(9Z-octadecenoyl)-2-hexadecanoyl-sn-glycero-3-phosphocholine + CoA. It catalyses the reaction 1-eicosanoyl-sn-glycero-3-phosphocholine + hexadecanoyl-CoA = 1-eicosanoyl-2-hexadecanoyl-sn-glycero-3-phosphocholine + CoA. The catalysed reaction is hexanoyl-CoA + 1-hexadecanoyl-sn-glycero-3-phosphocholine = 1-hexadecanoyl-2-hexanoyl-sn-glycero-3-phosphocholine + CoA. The enzyme catalyses octanoyl-CoA + 1-hexadecanoyl-sn-glycero-3-phosphocholine = 1-hexadecanoyl-2-octanoyl-sn-glycero-3-phosphocholine + CoA. It carries out the reaction decanoyl-CoA + 1-hexadecanoyl-sn-glycero-3-phosphocholine = 1-hexadecanoyl-2-decanoyl-sn-glycero-3-phosphocholine + CoA. It catalyses the reaction dodecanoyl-CoA + 1-hexadecanoyl-sn-glycero-3-phosphocholine = 1-hexadecanoyl-2-dodecanoyl-sn-glycero-3-phosphocholine + CoA. The catalysed reaction is tetradecanoyl-CoA + 1-hexadecanoyl-sn-glycero-3-phosphocholine = 1-hexadecanoyl-2-tetradecanoyl-sn-glycero-3-phosphocholine + CoA. The enzyme catalyses 1-hexadecanoyl-sn-glycero-3-phosphocholine + (9Z)-octadecenoyl-CoA = 1-hexadecanoyl-2-(9Z-octadecenoyl)-sn-glycero-3-phosphocholine + CoA. It carries out the reaction (9Z,12Z)-octadecadienoyl-CoA + 1-hexadecanoyl-sn-glycero-3-phosphocholine = 1-hexadecanoyl-2-(9Z,12Z-octadecadienoyl)-sn-glycero-3-phosphocholine + CoA. It catalyses the reaction (4Z,7Z,10Z,13Z,16Z,19Z)-docosahexaenoyl-CoA + 1-hexadecanoyl-sn-glycero-3-phosphocholine = 1-hexadecanoyl-2-(4Z,7Z,10Z,13Z,16Z,19Z-docosahexaenoyl)-sn-glycero-3-phosphocholine + CoA. The catalysed reaction is 1-hexadecanoyl-sn-glycero-3-phosphocholine + acetyl-CoA = 1-hexadecanoyl-2-acetyl-sn-glycero-3-phosphocholine + CoA. The enzyme catalyses eicosanoyl-CoA + 1-hexadecanoyl-sn-glycero-3-phosphocholine = 1-hexadecanoyl-2-eicosanoyl-sn-glycero-3-phosphocholine + CoA. It carries out the reaction 1-O-hexadecyl-sn-glycero-3-phosphocholine + acetyl-CoA = 1-O-hexadecyl-2-acetyl-sn-glycero-3-phosphocholine + CoA. It catalyses the reaction a 1-acyl-sn-glycero-3-phosphocholine + hexadecanoyl-CoA = 1-acyl-2-hexadecanoyl-sn-glycero-3-phosphocholine + CoA. The catalysed reaction is a 1-acyl-sn-glycero-3-phosphate + hexadecanoyl-CoA = 1-acyl-2-hexadecanoyl-sn-glycero-3-phosphate + CoA. The enzyme catalyses 1-acyl-sn-glycero-3-phospho-(1'-sn-glycerol) + hexadecanoyl-CoA = 1-acyl-2-hexadecanoyl-sn-glycero-3-phospho-(1'-sn-glycerol) + CoA. Its pathway is lipid metabolism; phospholipid metabolism. With respect to regulation, not activated by inflammatory stimulation. Inhibited by Cu(2+), Fe(2+), Ca(2+) and Mg(2+). Activity is not affected by Co(2+) or Mn(2+). In terms of biological role, exhibits both acyltransferase and acetyltransferase activities. Activity is calcium-independent. Catalyzes the conversion of lysophosphatidylcholine (1-acyl-sn-glycero-3-phosphocholine or LPC) into phosphatidylcholine (1,2-diacyl-sn-glycero-3-phosphocholine or PC). Catalyzes the conversion 1-acyl-sn-glycerol-3-phosphate (lysophosphatidic acid or LPA) into 1,2-diacyl-sn-glycerol-3-phosphate (phosphatidic acid or PA) by incorporating an acyl moiety at the sn-2 position of the glycerol backbone. Displays a clear preference for saturated fatty acyl-CoAs, and 1-myristoyl or 1-palmitoyl LPC as acyl donors and acceptors, respectively. Involved in platelet-activating factor (PAF) biosynthesis by catalyzing the conversion of the PAF precursor, 1-O-alkyl-sn-glycero-3-phosphocholine (lyso-PAF) into 1-O-alkyl-2-acetyl-sn-glycero-3-phosphocholine (PAF). May synthesize phosphatidylcholine in pulmonary surfactant, thereby playing a pivotal role in respiratory physiology. Involved in the regulation of lipid droplet number and size. The sequence is that of Lysophosphatidylcholine acyltransferase 1 (Lpcat1) from Mus musculus (Mouse).